A 214-amino-acid polypeptide reads, in one-letter code: Germin-like protein (214 aa).

Residues 1 to 22 form the signal peptide; it reads MVMMRIFFFLFLLAFPVFTANA. An intrachain disulfide couples Cys-28 to Cys-44. The Cupin type-1 domain occupies 58–204; it reads SGLAKPGNTT…TTCLDEATIK (147 aa). The Mn(2+) site is built by His-106, His-108, and Glu-113.

The protein belongs to the germin family. As to quaternary structure, oligomer (believed to be a pentamer but probably hexamer). Cotyledons and leaves.

It is found in the secreted. Its subcellular location is the extracellular space. The protein resides in the apoplast. This chain is Germin-like protein (GLP), found in Ipomoea nil (Japanese morning glory).